The primary structure comprises 197 residues: dCTP deaminase (197 aa).

105 to 110 (RSSIAR) provides a ligand contact to dCTP. Residue Glu133 is the Proton donor/acceptor of the active site. DCTP contacts are provided by Tyr166 and Gln177. A disordered region spans residues 172–197 (NKYAGQKDPKPSRLAEELSLEQLRGR). The span at 176–187 (GQKDPKPSRLAE) shows a compositional bias: basic and acidic residues.

The protein belongs to the dCTP deaminase family. In terms of assembly, homotrimer.

The enzyme catalyses dCTP + H2O + H(+) = dUTP + NH4(+). Its pathway is pyrimidine metabolism; dUMP biosynthesis; dUMP from dCTP (dUTP route): step 1/2. Catalyzes the deamination of dCTP to dUTP. The sequence is that of dCTP deaminase from Thermomicrobium roseum (strain ATCC 27502 / DSM 5159 / P-2).